The following is a 404-amino-acid chain: Retrotransposable element SLACS 45 kDa protein (404 aa).

Polar residues-rich tracts occupy residues 1-11 (MVRNLRSSEPQ) and 29-41 (PALNLQWPGQKQV). Disordered stretches follow at residues 1-62 (MVRN…NTSI), 86-111 (KKAAHSPLKTKPVNKEGNRKKYGRPP), 134-251 (LGKG…KKGA), 317-341 (CRQQHPGGPPDSLHPDNNRESGAVS), and 369-404 (PKLPVPEQGDYPNARSGIGTGAPHSPHHCDRSAGPP). A compositionally biased stretch (basic and acidic residues) spans 98–111 (VNKEGNRKKYGRPP). Residues 141–151 (TAHTKSNQSRV) show a composition bias toward polar residues. The C2H2-type zinc finger occupies 300–321 (CPVCGFAHPEETITVTHCRQQH). The span at 395 to 404 (HHCDRSAGPP) shows a compositional bias: basic and acidic residues.

This Trypanosoma brucei gambiense protein is Retrotransposable element SLACS 45 kDa protein.